The primary structure comprises 44 residues: Protein PsbN (44 aa).

Residues 6–26 (FFFTFFLWFLLLSATGYSIYV) traverse the membrane as a helical segment.

Belongs to the PsbN family.

The protein resides in the plastid. The protein localises to the chloroplast thylakoid membrane. May play a role in photosystem I and II biogenesis. In Tetradesmus obliquus (Green alga), this protein is Protein PsbN.